A 276-amino-acid chain; its full sequence is Hydroxyethylthiazole kinase (276 aa).

Residue methionine 48 participates in substrate binding. Residues arginine 124 and threonine 175 each coordinate ATP. Position 202 (glycine 202) interacts with substrate.

Belongs to the Thz kinase family. Mg(2+) is required as a cofactor.

It catalyses the reaction 5-(2-hydroxyethyl)-4-methylthiazole + ATP = 4-methyl-5-(2-phosphooxyethyl)-thiazole + ADP + H(+). It functions in the pathway cofactor biosynthesis; thiamine diphosphate biosynthesis; 4-methyl-5-(2-phosphoethyl)-thiazole from 5-(2-hydroxyethyl)-4-methylthiazole: step 1/1. In terms of biological role, catalyzes the phosphorylation of the hydroxyl group of 4-methyl-5-beta-hydroxyethylthiazole (THZ). The protein is Hydroxyethylthiazole kinase of Clostridium beijerinckii (strain ATCC 51743 / NCIMB 8052) (Clostridium acetobutylicum).